The following is a 2598-amino-acid chain: Partially reducing polyketide synthase men1 (2598 aa).

One can recognise a Ketosynthase family 3 (KS3) domain in the interval 7–435 (SQSIAIVGLS…GSNAHAILDD (429 aa)). Residues cysteine 181, histidine 316, and histidine 358 each act as for beta-ketoacyl synthase activity in the active site. A compositionally biased stretch (basic residues) spans 450-459 (GKSHHHHHQH). Disordered regions lie at residues 450 to 490 (GKSH…NGTT) and 537 to 557 (AEKQ…DPEK). Positions 474 to 490 (VNGTSEVNGTSGVNGTT) are enriched in low complexity. One can recognise a Malonyl-CoA:ACP transacylase (MAT) domain in the interval 611–915 (YVFTGQGAQW…RGPVTQILQS (305 aa)). An N-terminal hotdog fold region spans residues 1008–1151 (LGLIGAPMPN…GSVAVEFGAL (144 aa)). Positions 1008 to 1325 (LGLIGAPMPN…CVEMPSASGM (318 aa)) constitute a PKS/mFAS DH domain. A dehydratase (DH) domain region spans residues 1009 to 1323 (GLIGAPMPNF…LVCVEMPSAS (315 aa)). A C-terminal hotdog fold region spans residues 1169-1325 (TISQEVDVFY…CVEMPSASGM (157 aa)). An Enoyl reductase (ER) domain is found at 1886-2197 (GMLNTLCFEI…ARSRQDKIVI (312 aa)). The Ketoreductase (KR) domain occupies 2222–2399 (TYLIAGGLGG…AATIDLGIVK (178 aa)). The region spanning 2510–2587 (EAARLVSAAV…AFASDLAKKG (78 aa)) is the Carrier domain. The residue at position 2547 (serine 2547) is an O-(pantetheine 4'-phosphoryl)serine.

Requires pantetheine 4'-phosphate as cofactor.

It functions in the pathway secondary metabolite biosynthesis. Its function is as follows. Partially reducing polyketide synthase; part of the gene cluster that mediates the biosynthesis of menisporopsin A, a bioactive macrocyclic polylactone. The biosynthesis of menisporopsin A is performed by a reducing (man1) and a non-reducing (men2) polyketide synthase that catalyze the formation of each menisporopsin A subunits, while the esterification and cyclolactonization activities are probably peformed by the unusual thioesterase domain of men2. First, a reduced diketide intermediate, 3-hydroxybutyryl-S-ACP is produced by men1 and transferred to men2; this is followed by a second reduced diketide which is further elongated using 3 units of malonyl-coA to form a reduced pentaketide. The cyclization of this intermediate by the PT domain forms the second subunit, 2,4-dihydroxy-6-(2-hydroxy-n-propyl)benzoyl-S-ACP. The TE domain of men2 then esterifies the secondary hydroxyl group on the side chain of the second subunit with the acyl-TE of the first subunit to form the first ester intermediate. This process occurs iteratively to form a linear tetraester intermediate. The final subunit is formed by a similar process, except that an extra malonyl-CoA is required in an additional elongation step to form a reduced hexaketide intermediate, and the carbonyl group next to the secondary hydroxyl group is reduced by a trans-acting ketoreductase. Again, the PT domain catalyzes cyclization to form the largest subunit, 2,4-dihydroxy-6-(2,4-dihydroxy-n-pentyl) benzoyl-S-ACP. Then the linear pentaester intermediate is formed. In this step, if the intermediate transfer rate is slow, intra- molecular cyclization involving the secondary hydroxyl group of the pentaester intermediate may occur to form menisporopsin B. Alternatively, transfer of the pentaester intermediate to the TE domain would allow cyclolactonization to be catalyzed by the TE to form menisporopsin A. The polypeptide is Partially reducing polyketide synthase men1 (Menisporopsis theobromae).